The primary structure comprises 469 residues: Dihydrolipoyl dehydrogenase (469 aa).

Residues 40–48 (EKAVLGGVC), K57, and A120 each bind FAD. An intrachain disulfide couples C48 to C53. Residues 186–190 (GGGAI), E209, and 275–278 (AVGV) contribute to the NAD(+) site. The FAD site is built by D317 and A325. Residue H450 is the Proton acceptor of the active site.

The protein belongs to the class-I pyridine nucleotide-disulfide oxidoreductase family. Homodimer. FAD is required as a cofactor.

Its subcellular location is the cytoplasm. The enzyme catalyses N(6)-[(R)-dihydrolipoyl]-L-lysyl-[protein] + NAD(+) = N(6)-[(R)-lipoyl]-L-lysyl-[protein] + NADH + H(+). In terms of biological role, lipoamide dehydrogenase is a component of the alpha-ketoacid dehydrogenase complexes. The protein is Dihydrolipoyl dehydrogenase (lpd) of Chlorobaculum tepidum (strain ATCC 49652 / DSM 12025 / NBRC 103806 / TLS) (Chlorobium tepidum).